A 208-amino-acid polypeptide reads, in one-letter code: MELKVLNTAGAETGEVVTLRDDIFGAEVSEHAIWLDVKSILANKRQGTHKSKTRAEVRGGGRKPYRQKGTGNARQGSTRSPLMIGGGTIFGPTPHGYDQKVNRKVKQLARRSAFSAKAQEGRILIVEDFALAEIKTKPVADMLRNLGLDAKKILMLTPDYNMVIARSGRNIEALNIMTAEKASTYDILNSHTVLFQKTALKKLEETLG.

Residues 45 to 83 (RQGTHKSKTRAEVRGGGRKPYRQKGTGNARQGSTRSPLM) form a disordered region. Polar residues predominate over residues 69 to 80 (GTGNARQGSTRS).

The protein belongs to the universal ribosomal protein uL4 family. Part of the 50S ribosomal subunit.

In terms of biological role, one of the primary rRNA binding proteins, this protein initially binds near the 5'-end of the 23S rRNA. It is important during the early stages of 50S assembly. It makes multiple contacts with different domains of the 23S rRNA in the assembled 50S subunit and ribosome. Functionally, forms part of the polypeptide exit tunnel. This Chlorobium luteolum (strain DSM 273 / BCRC 81028 / 2530) (Pelodictyon luteolum) protein is Large ribosomal subunit protein uL4.